We begin with the raw amino-acid sequence, 378 residues long: Spermidine/putrescine import ATP-binding protein PotA (378 aa).

One can recognise an ABC transporter domain in the interval 18–248 (VQLAGIRKCF…PKNLFVAGFI (231 aa)). 50–57 (GPSGCGKT) provides a ligand contact to ATP.

It belongs to the ABC transporter superfamily. Spermidine/putrescine importer (TC 3.A.1.11.1) family. As to quaternary structure, the complex is composed of two ATP-binding proteins (PotA), two transmembrane proteins (PotB and PotC) and a solute-binding protein (PotD).

It localises to the cell inner membrane. It catalyses the reaction ATP + H2O + polyamine-[polyamine-binding protein]Side 1 = ADP + phosphate + polyamineSide 2 + [polyamine-binding protein]Side 1.. Part of the ABC transporter complex PotABCD involved in spermidine/putrescine import. Responsible for energy coupling to the transport system. The protein is Spermidine/putrescine import ATP-binding protein PotA of Shigella boydii serotype 4 (strain Sb227).